The chain runs to 574 residues: Sulfite reductase [NADPH] hemoprotein beta-component (574 aa).

Cys439, Cys445, Cys484, and Cys488 together coordinate [4Fe-4S] cluster. Cys488 provides a ligand contact to siroheme.

The protein belongs to the nitrite and sulfite reductase 4Fe-4S domain family. In terms of assembly, alpha(8)-beta(8). The alpha component is a flavoprotein, the beta component is a hemoprotein. Requires siroheme as cofactor. It depends on [4Fe-4S] cluster as a cofactor.

The catalysed reaction is hydrogen sulfide + 3 NADP(+) + 3 H2O = sulfite + 3 NADPH + 4 H(+). It participates in sulfur metabolism; hydrogen sulfide biosynthesis; hydrogen sulfide from sulfite (NADPH route): step 1/1. Functionally, component of the sulfite reductase complex that catalyzes the 6-electron reduction of sulfite to sulfide. This is one of several activities required for the biosynthesis of L-cysteine from sulfate. The sequence is that of Sulfite reductase [NADPH] hemoprotein beta-component from Paenibacillus sp. (strain JDR-2).